The chain runs to 125 residues: uncharacterized protein (125 aa).

A helical membrane pass occupies residues 96 to 113 (LFMMSIVSSYVCYITVLL).

It is found in the membrane. This is an uncharacterized protein from Saccharomyces cerevisiae (strain ATCC 204508 / S288c) (Baker's yeast).